Reading from the N-terminus, the 712-residue chain is Solute carrier organic anion transporter family member 1C1 (712 aa).

Over methionine 1–lysine 43 the chain is Cytoplasmic. A helical membrane pass occupies residues valine 44–leucine 63. Residues lysine 64–glycine 82 lie on the Extracellular side of the membrane. A helical membrane pass occupies residues valine 83 to glycine 103. Residues alanine 104–proline 109 are Cytoplasmic-facing. The chain crosses the membrane as a helical span at residues lysine 110–glutamate 134. The Extracellular portion of the chain corresponds to glutamine 135–serine 184. N-linked (GlcNAc...) asparagine glycosylation is present at asparagine 146. Residues serine 185 to aspartate 213 form a helical membrane-spanning segment. The Cytoplasmic portion of the chain corresponds to aspartate 214–alanine 232. Residues isoleucine 233–isoleucine 253 traverse the membrane as a helical segment. Residues glycine 254 to valine 271 lie on the Extracellular side of the membrane. A helical membrane pass occupies residues glycine 272 to proline 296. Residues lysine 297–asparagine 348 are Cytoplasmic-facing. A helical membrane pass occupies residues leucine 349–phenylalanine 370. The Extracellular portion of the chain corresponds to glycine 371–arginine 390. A helical membrane pass occupies residues alanine 391–methionine 414. Over lysine 415–arginine 418 the chain is Cytoplasmic. Residues isoleucine 419 to leucine 442 traverse the membrane as a helical segment. At phenylalanine 443–phenylalanine 554 the chain is on the extracellular side. In terms of domain architecture, Kazal-like spans arginine 470–glycine 525. Intrachain disulfides connect cysteine 476-cysteine 506, cysteine 482-cysteine 502, and cysteine 491-cysteine 523. Asparagine 510, asparagine 520, and asparagine 533 each carry an N-linked (GlcNAc...) asparagine glycan. A helical membrane pass occupies residues leucine 555 to leucine 577. Over arginine 578 to serine 586 the chain is Cytoplasmic. A helical membrane pass occupies residues phenylalanine 587–isoleucine 612. Residues aspartate 613–threonine 646 lie on the Extracellular side of the membrane. The chain crosses the membrane as a helical span at residues valine 647 to leucine 664. Residues lysine 665 to leucine 712 are Cytoplasmic-facing.

This sequence belongs to the organo anion transporter (TC 2.A.60) family. As to expression, highly expressed in brain and in Leydig cells in testis. Localized in nests of Leydig cells (at protein level). Expressed in choroid plexus (at protein level). Not strongly enriched in cerebral microvessels.

The protein resides in the cell membrane. The enzyme catalyses 3,3',5'-triiodo-L-thyronine(out) = 3,3',5'-triiodo-L-thyronine(in). The catalysed reaction is L-thyroxine(out) = L-thyroxine(in). It catalyses the reaction L-thyroxine sulfate(out) = L-thyroxine sulfate(in). Functionally, mediates the Na(+)-independent high affinity transport of organic anions such as the thyroid hormones L-thyroxine (T4), L-thyroxine sulfate (T4S), and 3,3',5'-triiodo-L-thyronine (reverse T3, rT3) at the plasma membrane. Regulates T4 levels in different brain regions by transporting T4, and also by serving as an export pump for T4S, which is a source of T4 after hydrolysis by local sulfatases. Increases the access of these substrates to the intracellular sites where they are metabolized by the deiodinases. Other potential substrates, such as triiodothyronine (T3), 17-beta-glucuronosyl estradiol (17beta-estradiol 17-O-(beta-D-glucuronate)), estrone-3-sulfate (E1S) and sulfobromophthalein (BSP) are transported with much lower efficiency. Transports T4 and E1S in a pH-insensitive manner. Facilitates the transport of thyroid hormones across the blood-brain barrier and into glia and neuronal cells in the brain. The sequence is that of Solute carrier organic anion transporter family member 1C1 (SLCO1C1) from Homo sapiens (Human).